Here is a 587-residue protein sequence, read N- to C-terminus: Tripartite motif-containing protein 29 (587 aa).

Residues Met1 to Ser71 are disordered. 4 positions are modified to phosphoserine: Ser21, Ser28, Ser58, and Ser104. Tyr106 bears the Phosphotyrosine mark. A B box-type zinc finger spans residues Phe220–Val260. Cys225, His228, Cys247, and His252 together coordinate Zn(2+). Residues Thr259 to Asp348 adopt a coiled-coil conformation. Position 476 is a phosphothreonine (Thr476). Ser489 is modified (phosphoserine).

As to quaternary structure, interacts with VIM and HINT1. Interacts with IKBKG/NEMO. Interacts with STING1.

It localises to the cytoplasm. Its subcellular location is the lysosome. Functionally, plays a crucial role in the regulation of macrophage activation in response to viral or bacterial infections within the respiratory tract. Mechanistically, TRIM29 interacts with IKBKG/NEMO in the lysosome where it induces its 'Lys-48' ubiquitination and subsequent degradation. In turn, the expression of type I interferons and the production of pro-inflammatory cytokines are inhibited. Additionally, induces the 'Lys-48' ubiquitination of STING1 in a similar way, leading to its degradation. The sequence is that of Tripartite motif-containing protein 29 (Trim29) from Mus musculus (Mouse).